The sequence spans 221 residues: Large ribosomal subunit protein uL4 (221 aa).

Residues alanine 44 to threonine 102 are disordered. Over residues glycine 61 to glycine 72 the composition is skewed to basic residues.

It belongs to the universal ribosomal protein uL4 family. As to quaternary structure, part of the 50S ribosomal subunit.

One of the primary rRNA binding proteins, this protein initially binds near the 5'-end of the 23S rRNA. It is important during the early stages of 50S assembly. It makes multiple contacts with different domains of the 23S rRNA in the assembled 50S subunit and ribosome. Functionally, forms part of the polypeptide exit tunnel. The protein is Large ribosomal subunit protein uL4 of Streptomyces avermitilis (strain ATCC 31267 / DSM 46492 / JCM 5070 / NBRC 14893 / NCIMB 12804 / NRRL 8165 / MA-4680).